A 1683-amino-acid chain; its full sequence is ABC transporter 7 (1683 aa).

Residues 24-44 (DYLRILLPAVVIGLSVLNLGF) form a helical membrane-spanning segment. A disordered region spans residues 53-93 (RSKSPSTHAYAPVSNGDNSRPGAHRTDISPDDDAIAQDDED). The segment covering 81–93 (SPDDDAIAQDDED) has biased composition (acidic residues). 4 helical membrane-spanning segments follow: residues 127–147 (LSVV…VIAL), 157–177 (TLTG…LATL), 190–210 (HLWN…IGIF), and 221–241 (LAQI…FMAI). Asn-247 carries an N-linked (GlcNAc...) asparagine glycan. 2 helical membrane passes run 336 to 356 (GWAV…KAIL) and 368 to 388 (SVVW…SLGD). Positions 338-664 (AVMSGMFTFA…LGDMLAHVQE (327 aa)) constitute an ABC transmembrane type-1 1 domain. Residues 451–473 (GDNDESEDGKDGDKDKEDSSDEQ) form a disordered region. Asn-489 carries an N-linked (GlcNAc...) asparagine glycan. Transmembrane regions (helical) follow at residues 496 to 516 (YLHF…VLLY) and 518 to 538 (VLGM…PVNI). The N-linked (GlcNAc...) asparagine glycan is linked to Asn-545. Transmembrane regions (helical) follow at residues 602–622 (VWAC…FFSF) and 632–648 (PLHP…FMLL). The region spanning 700-949 (IALKDAAFIW…GALGEEIAQK (250 aa)) is the ABC transporter 1 domain. An ATP-binding site is contributed by 742 to 749 (GPTGSGKT). The interval 952–998 (SETPNISRIPSRVPSSVGEGSGNTLLDTDGDDHLSKPKNAKKAKKAE) is disordered. Asn-956 carries N-linked (GlcNAc...) asparagine glycosylation. The chain crosses the membrane as a helical span at residues 1016–1036 (LYLASMGSWWFWVVAGCIFIS). One can recognise an ABC transmembrane type-1 2 domain in the interval 1028 to 1351 (VVAGCIFISQ…NILWLVRLYS (324 aa)). An N-linked (GlcNAc...) asparagine glycan is attached at Asn-1097. A run of 3 helical transmembrane segments spans residues 1111 to 1131 (AQYY…TAFL), 1182 to 1202 (VDQE…GITV), and 1204 to 1224 (VVLI…ITIA). N-linked (GlcNAc...) asparagine glycosylation occurs at Asn-1277. Transmembrane regions (helical) follow at residues 1304–1324 (LLGD…IGVI) and 1327–1347 (GWAG…LWLV). Residues 1392-1649 (VEFINYTTSY…GEGGSFKSMC (258 aa)) form the ABC transporter 2 domain. N-linked (GlcNAc...) asparagine glycosylation is found at Asn-1396 and Asn-1411. 1426 to 1433 (GRTGAGKS) serves as a coordination point for ATP. Residues Asn-1541 and Asn-1552 are each glycosylated (N-linked (GlcNAc...) asparagine).

The protein belongs to the ABC transporter superfamily.

The protein resides in the membrane. Its function is as follows. ABC transporter; part of the gene cluster that mediates the biosynthesis of pyriculol and pyriculariol, two heptaketides that induce lesion formation upon application on rice leaves but are dispensable for pathogenicity. With the MFS transporter MFS1, is most likely responsible for pyriculol and pyriculariol secretion and thereby may contribute to intrinsic resistance. The polypeptide is ABC transporter 7 (Pyricularia oryzae (strain 70-15 / ATCC MYA-4617 / FGSC 8958) (Rice blast fungus)).